We begin with the raw amino-acid sequence, 371 residues long: Probable protein phosphatase 2C 11 (371 aa).

Residues 29-49 traverse the membrane as a helical segment; sequence FFFFLFNSQTISSFIIFYLFL. The tract at residues 67-95 is disordered; sequence PPLSVAPLRGDANSPPPESSSSPATKSSL. A compositionally biased stretch (low complexity) spans 85-94; the sequence is SSSSPATKSS. Positions 123–368 constitute a PPM-type phosphatase domain; the sequence is SYGYSSLKGK…DNITCIVVRF (246 aa). Mn(2+)-binding residues include Asp-159, Gly-160, Asp-320, and Asp-359.

The protein belongs to the PP2C family. It depends on Mg(2+) as a cofactor. Requires Mn(2+) as cofactor.

It is found in the membrane. It carries out the reaction O-phospho-L-seryl-[protein] + H2O = L-seryl-[protein] + phosphate. The enzyme catalyses O-phospho-L-threonyl-[protein] + H2O = L-threonyl-[protein] + phosphate. The polypeptide is Probable protein phosphatase 2C 11 (Arabidopsis thaliana (Mouse-ear cress)).